The following is a 250-amino-acid chain: MTITEIKNLLQGEVSKEQLEELKADERKGVQKLLISYEKRQAKYAKALAQFQSRFSYEKEFWQKDQLVAGVDEVGRGPLAGPVVTAAVILPHDFDLIDVNDSKKLSPKKRQALFPKILEKAVSVSVGLANNDVIDQINIYEADRLAMAHAVQGLKVKPDALLVDAMNVPLNIPQVKLIHGDAKSNSIAAASIVAKVFRDNLMDAYGELYPEYDFKHNAGYGTREHMEALEKYGPTPIHRRSFAPVSEYEK.

The RNase H type-2 domain occupies 66–250; the sequence is QLVAGVDEVG…SFAPVSEYEK (185 aa). Residues Asp-72, Glu-73, and Asp-164 each coordinate a divalent metal cation.

The protein belongs to the RNase HII family. Mn(2+) is required as a cofactor. The cofactor is Mg(2+).

The protein resides in the cytoplasm. The enzyme catalyses Endonucleolytic cleavage to 5'-phosphomonoester.. Functionally, endonuclease that specifically degrades the RNA of RNA-DNA hybrids. The chain is Ribonuclease HII from Lactobacillus johnsonii (strain CNCM I-12250 / La1 / NCC 533).